The chain runs to 55 residues: Large ribosomal subunit protein bL33 (55 aa).

Belongs to the bacterial ribosomal protein bL33 family.

The chain is Large ribosomal subunit protein bL33 from Dehalococcoides mccartyi (strain ATCC BAA-2266 / KCTC 15142 / 195) (Dehalococcoides ethenogenes (strain 195)).